The following is a 578-amino-acid chain: Phenylalanine--tRNA ligase beta subunit (578 aa).

Residues 292–370 enclose the B5 domain; the sequence is FDTDEKSVSH…RAYGFDNLEP (79 aa). Asp-348, Asp-354, Asp-357, and Asp-358 together coordinate Mg(2+).

The protein belongs to the phenylalanyl-tRNA synthetase beta subunit family. Type 2 subfamily. As to quaternary structure, tetramer of two alpha and two beta subunits. It depends on Mg(2+) as a cofactor.

It is found in the cytoplasm. The catalysed reaction is tRNA(Phe) + L-phenylalanine + ATP = L-phenylalanyl-tRNA(Phe) + AMP + diphosphate + H(+). The sequence is that of Phenylalanine--tRNA ligase beta subunit from Halorubrum lacusprofundi (strain ATCC 49239 / DSM 5036 / JCM 8891 / ACAM 34).